A 328-amino-acid polypeptide reads, in one-letter code: ATP synthase mitochondrial F1 complex assembly factor 1 (328 aa).

The N-terminal 57 residues, 1-57 (MAAVVVAAAGGAGPAVLQVAGLYRGLCAVRSRALGLGLVSPAQLRVFPVRPGSGRPE), are a transit peptide targeting the mitochondrion.

It belongs to the ATP11 family. Interacts with ATP5F1B; involved in the assembly of the F1 component of the mitochondrial ATP synthase (ATPase). Weakly expressed in muscle.

It localises to the mitochondrion inner membrane. Its function is as follows. Has a complex stabilizing activity in the assembly of the mitochondrial F1-F0 complex. This Homo sapiens (Human) protein is ATP synthase mitochondrial F1 complex assembly factor 1.